The following is a 206-amino-acid chain: Large ribosomal subunit protein uL4 (206 aa).

Residues 46 to 95 (GNRAQKTRAEVKHSTKKPWRQKGTGRARSGMTSSPLWRKGGRAFPNKPDE) form a disordered region. The segment covering 59-70 (STKKPWRQKGTG) has biased composition (basic residues).

The protein belongs to the universal ribosomal protein uL4 family. Part of the 50S ribosomal subunit.

One of the primary rRNA binding proteins, this protein initially binds near the 5'-end of the 23S rRNA. It is important during the early stages of 50S assembly. It makes multiple contacts with different domains of the 23S rRNA in the assembled 50S subunit and ribosome. Functionally, forms part of the polypeptide exit tunnel. In Neisseria meningitidis serogroup C (strain 053442), this protein is Large ribosomal subunit protein uL4.